Consider the following 124-residue polypeptide: Small ribosomal subunit protein uS12 (124 aa).

Position 89 is a 3-methylthioaspartic acid (Asp-89).

Belongs to the universal ribosomal protein uS12 family. In terms of assembly, part of the 30S ribosomal subunit. Contacts proteins S8 and S17. May interact with IF1 in the 30S initiation complex.

Functionally, with S4 and S5 plays an important role in translational accuracy. Interacts with and stabilizes bases of the 16S rRNA that are involved in tRNA selection in the A site and with the mRNA backbone. Located at the interface of the 30S and 50S subunits, it traverses the body of the 30S subunit contacting proteins on the other side and probably holding the rRNA structure together. The combined cluster of proteins S8, S12 and S17 appears to hold together the shoulder and platform of the 30S subunit. This Shewanella piezotolerans (strain WP3 / JCM 13877) protein is Small ribosomal subunit protein uS12.